The primary structure comprises 122 residues: Probable DNA-directed RNA polymerase II subunit RPB11 (122 aa).

It belongs to the archaeal Rpo11/eukaryotic RPB11/RPC19 RNA polymerase subunit family. As to quaternary structure, component of the RNA polymerase II (Pol II) complex consisting of 12 subunits.

It localises to the nucleus. DNA-dependent RNA polymerase catalyzes the transcription of DNA into RNA using the four ribonucleoside triphosphates as substrates. Component of RNA polymerase II which synthesizes mRNA precursors and many functional non-coding RNAs. Pol II is the central component of the basal RNA polymerase II transcription machinery. It is composed of mobile elements that move relative to each other. RPB11 is part of the core element with the central large cleft. The chain is Probable DNA-directed RNA polymerase II subunit RPB11 (rpb-11) from Caenorhabditis elegans.